A 24-amino-acid chain; its full sequence is Coenzyme PQQ synthesis protein A (24 aa).

The pyrroloquinoline quinone (Glu-Tyr) cross-link spans 16–20; it reads EVTMY.

This sequence belongs to the PqqA family.

Its pathway is cofactor biosynthesis; pyrroloquinoline quinone biosynthesis. Functionally, required for coenzyme pyrroloquinoline quinone (PQQ) biosynthesis. PQQ is probably formed by cross-linking a specific glutamate to a specific tyrosine residue and excising these residues from the peptide. This chain is Coenzyme PQQ synthesis protein A, found in Acinetobacter baumannii (strain SDF).